The chain runs to 150 residues: Nucleoside diphosphate kinase (150 aa).

ATP is bound by residues Lys-9, Phe-57, Arg-85, Thr-91, Arg-102, and Asn-112. The active-site Pros-phosphohistidine intermediate is His-115.

It belongs to the NDK family. Requires Mg(2+) as cofactor.

It is found in the cytoplasm. The enzyme catalyses a 2'-deoxyribonucleoside 5'-diphosphate + ATP = a 2'-deoxyribonucleoside 5'-triphosphate + ADP. It carries out the reaction a ribonucleoside 5'-diphosphate + ATP = a ribonucleoside 5'-triphosphate + ADP. Its function is as follows. Major role in the synthesis of nucleoside triphosphates other than ATP. The ATP gamma phosphate is transferred to the NDP beta phosphate via a ping-pong mechanism, using a phosphorylated active-site intermediate. In Methanoregula boonei (strain DSM 21154 / JCM 14090 / 6A8), this protein is Nucleoside diphosphate kinase.